A 248-amino-acid chain; its full sequence is uncharacterized protein (248 aa).

The chain crosses the membrane as a helical span at residues 7–25 (TIFIGGIYGLGVYIGAVAW).

This sequence belongs to the methyltransferase superfamily. METL family.

Its subcellular location is the mitochondrion inner membrane. In terms of biological role, probable methyltransferase. This is an uncharacterized protein from Schizosaccharomyces pombe (strain 972 / ATCC 24843) (Fission yeast).